The primary structure comprises 227 residues: Albumin-2 (227 aa).

Hemopexin repeat units follow at residues 3–46 (PGYI…GPTP), 61–111 (SYGI…FPFF), 117–165 (ESGI…YPCF), and 171–221 (ESGA…WPSL). Ca(2+)-binding residues include Asn-7 and Asp-65. Ser-118 lines the spermine pocket. Ca(2+) is bound by residues Asp-121 and Asp-175.

In terms of assembly, monomer and homodimer. Dimers are prevalent in solution.

The protein resides in the cytoplasm. The protein localises to the cytosol. Its function is as follows. May play a role in response to oxidative stress and polyamine biosynthesis. The monomeric form binds one hemin per monomer. In the dimeric form, about half of the dimers bind one molecule of spermine each under physiological conditions. Ligand binding is mutually exclusive as binding of hemin leads to dissociation of the dimer. This chain is Albumin-2, found in Lathyrus sativus (White vetchling).